The chain runs to 129 residues: Histone H2B.1 (129 aa).

A compositionally biased stretch (basic and acidic residues) spans 1-19; sequence MAPKAEKKPASKAPAEKKP. A disordered region spans residues 1–37; that stretch reads MAPKAEKKPASKAPAEKKPAAKKTASTDSKKRTKTRK. N6-acetyllysine; alternate occurs at positions 7 and 8. Glycyl lysine isopeptide (Lys-Gly) (interchain with G-Cter in SUMO); alternate cross-links involve residues Lys-7 and Lys-8. Residue Ser-11 is modified to Phosphoserine. At Lys-12 the chain carries N6-acetyllysine. The residue at position 17 (Lys-17) is an N6-acetyllysine; alternate. Residue Lys-17 forms a Glycyl lysine isopeptide (Lys-Gly) (interchain with G-Cter in SUMO); alternate linkage. Residue Lys-18 forms a Glycyl lysine isopeptide (Lys-Gly) (interchain with G-Cter in SUMO) linkage. Lys-123 is covalently cross-linked (Glycyl lysine isopeptide (Lys-Gly) (interchain with G-Cter in ubiquitin)).

It belongs to the histone H2B family. The nucleosome is a histone octamer containing two molecules each of H2A, H2B, H3 and H4 assembled in one H3-H4 heterotetramer and two H2A-H2B heterodimers. The octamer wraps approximately 147 bp of DNA. In terms of processing, monoubiquitinated by the UBC2-BRE1 complex to form H2BK123ub1. H2BK123ub1 gives a specific tag for epigenetic transcriptional activation and is also prerequisite for H3K4me and H3K79me formation. H2BK123ub1 also modulates the formation of double-strand breaks during meiosis and is a prerequisite for DNA-damage checkpoint activation. Phosphorylated by STE20 to form H2BS10ph during progression through meiotic prophase. May be correlated with chromosome condensation. Post-translationally, acetylated by GCN5 to form H2BK11ac and H2BK16ac. H2BK16ac can also be formed by ESA1. Acetylation of N-terminal lysines and particularly formation of H2BK11acK16ac has a positive effect on transcription. In terms of processing, sumoylation to form H2BK6su or H2BK7su, and probably also H2BK16su or H2BK17su, occurs preferentially near the telomeres and represses gene transcription.

It localises to the nucleus. It is found in the chromosome. In terms of biological role, core component of nucleosome. Nucleosomes wrap and compact DNA into chromatin, limiting DNA accessibility to the cellular machineries which require DNA as a template. Histones thereby play a central role in transcription regulation, DNA repair, DNA replication and chromosomal stability. DNA accessibility is regulated via a complex set of post-translational modifications of histones, also called histone code, and nucleosome remodeling. This Meyerozyma guilliermondii (strain ATCC 6260 / CBS 566 / DSM 6381 / JCM 1539 / NBRC 10279 / NRRL Y-324) (Yeast) protein is Histone H2B.1 (HTB1).